Consider the following 394-residue polypeptide: Tryptophan synthase beta chain (394 aa).

Lys-90 bears the N6-(pyridoxal phosphate)lysine mark.

The protein belongs to the TrpB family. As to quaternary structure, tetramer of two alpha and two beta chains. Pyridoxal 5'-phosphate is required as a cofactor.

It carries out the reaction (1S,2R)-1-C-(indol-3-yl)glycerol 3-phosphate + L-serine = D-glyceraldehyde 3-phosphate + L-tryptophan + H2O. The protein operates within amino-acid biosynthesis; L-tryptophan biosynthesis; L-tryptophan from chorismate: step 5/5. The beta subunit is responsible for the synthesis of L-tryptophan from indole and L-serine. The protein is Tryptophan synthase beta chain of Bacteroides thetaiotaomicron (strain ATCC 29148 / DSM 2079 / JCM 5827 / CCUG 10774 / NCTC 10582 / VPI-5482 / E50).